The chain runs to 211 residues: MDIHVVDHPLAASRLTLMRDARSDNTAFRAALRDLGTMLVYEAARDLPVEHFDCVTPVATAEGTRLQNPPIIVPIIRAGLGMIDPALSMIPDAQVGFIGMARDEETHEPVPYLEALPEDLSGRSVFVVDPMLATGGSLLHSLKLLADRGATDITAICMVSAQPGVDALANSGLPVRLVTAAIDPALNEDAYIVPGLGDAGDRLYGPRNIDL.

5-phospho-alpha-D-ribose 1-diphosphate contacts are provided by residues Arg77, Arg102, and 129-137 (DPMLATGGS). Residues Ile192 and 197-199 (GDA) contribute to the uracil site. Position 198 (Asp198) interacts with 5-phospho-alpha-D-ribose 1-diphosphate.

The protein belongs to the UPRTase family. Mg(2+) serves as cofactor.

The catalysed reaction is UMP + diphosphate = 5-phospho-alpha-D-ribose 1-diphosphate + uracil. It participates in pyrimidine metabolism; UMP biosynthesis via salvage pathway; UMP from uracil: step 1/1. Its activity is regulated as follows. Allosterically activated by GTP. Catalyzes the conversion of uracil and 5-phospho-alpha-D-ribose 1-diphosphate (PRPP) to UMP and diphosphate. In Corynebacterium aurimucosum (strain ATCC 700975 / DSM 44827 / CIP 107346 / CN-1) (Corynebacterium nigricans), this protein is Uracil phosphoribosyltransferase.